The sequence spans 123 residues: MPTISQLIRKPRQEKTYREKARHLGASPQKRGVCTRVYTTTPKKPNSALRKVAKVRLTNGFEVIGYIPGEGHNLQEHSVVMIRGGRVKDLPGVRYHILRGVLDTQGVKNRKQRRSKYGAKRPK.

The interval 11–32 (PRQEKTYREKARHLGASPQKRG) is disordered. Aspartate 89 is subject to 3-methylthioaspartic acid.

Belongs to the universal ribosomal protein uS12 family. As to quaternary structure, part of the 30S ribosomal subunit. Contacts proteins S8 and S17. May interact with IF1 in the 30S initiation complex.

Its function is as follows. With S4 and S5 plays an important role in translational accuracy. Interacts with and stabilizes bases of the 16S rRNA that are involved in tRNA selection in the A site and with the mRNA backbone. Located at the interface of the 30S and 50S subunits, it traverses the body of the 30S subunit contacting proteins on the other side and probably holding the rRNA structure together. The combined cluster of proteins S8, S12 and S17 appears to hold together the shoulder and platform of the 30S subunit. This Methylocella silvestris (strain DSM 15510 / CIP 108128 / LMG 27833 / NCIMB 13906 / BL2) protein is Small ribosomal subunit protein uS12.